The primary structure comprises 191 residues: Protein Ves (191 aa).

Belongs to the Ves family.

The sequence is that of Protein Ves from Citrobacter koseri (strain ATCC BAA-895 / CDC 4225-83 / SGSC4696).